The primary structure comprises 347 residues: MEIRLSEIAQFLGCAIEGDGEAPIRGIAPLHQAQASELSFYTNRKYAAQARLSKAGAIIVGAKDREQFAGRRLLISDNPYRDFARVVDRWFNRSYRPAPGVHPTAIVGDDVQIAENCSIGAYCVIEDGVTIKAHTVLFPFCYVGAKTILGEHCLLYPRVTLLERVRIGHRVILHPGVVIGGDGFGFAPDPPQGYFKVPQVGWVEIADDVEVQCNTAIDRGALGPTRIGQGSKIDNLVQVGHNVEIGEHSIIVSQVGISGSSKIGNWVTLAGQVGLVGHIRIGDGAVITAQSGVAKDVPPKAIMTGSPVQPMMENRRALAELNRLRELRKKVRELERRLTVLEQVESC.

Residue H241 is the Proton acceptor of the active site.

It belongs to the transferase hexapeptide repeat family. LpxD subfamily. In terms of assembly, homotrimer.

The catalysed reaction is a UDP-3-O-[(3R)-3-hydroxyacyl]-alpha-D-glucosamine + a (3R)-hydroxyacyl-[ACP] = a UDP-2-N,3-O-bis[(3R)-3-hydroxyacyl]-alpha-D-glucosamine + holo-[ACP] + H(+). The protein operates within bacterial outer membrane biogenesis; LPS lipid A biosynthesis. Catalyzes the N-acylation of UDP-3-O-acylglucosamine using 3-hydroxyacyl-ACP as the acyl donor. Is involved in the biosynthesis of lipid A, a phosphorylated glycolipid that anchors the lipopolysaccharide to the outer membrane of the cell. This Nitrosococcus oceani (strain ATCC 19707 / BCRC 17464 / JCM 30415 / NCIMB 11848 / C-107) protein is UDP-3-O-acylglucosamine N-acyltransferase.